Here is a 431-residue protein sequence, read N- to C-terminus: Mediator of RNA polymerase II transcription subunit 2 (431 aa).

Position 6 is a phosphoserine (serine 6). Over residues glycine 105–leucine 140 the composition is skewed to basic and acidic residues. A disordered region spans residues glycine 105 to lysine 178. Residues alanine 143 to asparagine 152 show a composition bias toward low complexity. Residues asparagine 162–lysine 178 are compositionally biased toward polar residues. Serine 208 carries the phosphoserine; by CDK8 modification. A disordered region spans residues asparagine 284–glycine 399. The span at asparagine 304–asparagine 313 shows a compositional bias: basic and acidic residues. The span at asparagine 318 to asparagine 365 shows a compositional bias: low complexity. Positions serine 366 to serine 387 are enriched in polar residues.

It belongs to the mediator complex subunit 2 family. In terms of assembly, component of the Mediator complex, which is composed of at least 21 subunits that form three structurally distinct submodules. The Mediator head module contains MED6, MED8, MED11, SRB4/MED17, SRB5/MED18, ROX3/MED19, SRB2/MED20 and SRB6/MED22, the middle module contains MED1, MED4, NUT1/MED5, MED7, CSE2/MED9, NUT2/MED10, SRB7/MED21 and SOH1/MED31, and the tail module contains MED2, PGD1/MED3, RGR1/MED14, GAL11/MED15 and SIN4/MED16. The head and the middle modules interact directly with RNA polymerase II, whereas the elongated tail module interacts with gene-specific regulatory proteins.

The protein localises to the nucleus. Its function is as follows. Component of the Mediator complex, a coactivator involved in the regulated transcription of nearly all RNA polymerase II-dependent genes. Mediator functions as a bridge to convey information from gene-specific regulatory proteins to the basal RNA polymerase II transcription machinery. The Mediator complex, having a compact conformation in its free form, is recruited to promoters by direct interactions with regulatory proteins and serves for the assembly of a functional preinitiation complex with RNA polymerase II and the general transcription factors. The Mediator complex unfolds to an extended conformation and partially surrounds RNA polymerase II, specifically interacting with the unphosphorylated form of the C-terminal domain (CTD) of RNA polymerase II. The Mediator complex dissociates from the RNA polymerase II holoenzyme and stays at the promoter when transcriptional elongation begins. This is Mediator of RNA polymerase II transcription subunit 2 (MED2) from Saccharomyces cerevisiae (strain ATCC 204508 / S288c) (Baker's yeast).